The chain runs to 140 residues: Nucleoside diphosphate kinase (140 aa).

ATP is bound by residues lysine 11, phenylalanine 59, arginine 87, threonine 93, arginine 104, and asparagine 114. Histidine 117 serves as the catalytic Pros-phosphohistidine intermediate.

The protein belongs to the NDK family. Homotetramer. Mg(2+) is required as a cofactor.

It is found in the cytoplasm. The catalysed reaction is a 2'-deoxyribonucleoside 5'-diphosphate + ATP = a 2'-deoxyribonucleoside 5'-triphosphate + ADP. It catalyses the reaction a ribonucleoside 5'-diphosphate + ATP = a ribonucleoside 5'-triphosphate + ADP. In terms of biological role, major role in the synthesis of nucleoside triphosphates other than ATP. The ATP gamma phosphate is transferred to the NDP beta phosphate via a ping-pong mechanism, using a phosphorylated active-site intermediate. The protein is Nucleoside diphosphate kinase of Methylocella silvestris (strain DSM 15510 / CIP 108128 / LMG 27833 / NCIMB 13906 / BL2).